We begin with the raw amino-acid sequence, 247 residues long: Calpain small subunit 2 (247 aa).

12 residues coordinate Ca(2+): Ala-88, Asp-91, Glu-93, Asp-131, Asp-133, Thr-135, Lys-137, Glu-142, Asp-161, Asp-163, Ser-165, and Asp-204. EF-hand domains follow at residues 118-151 (FSLD…NNIK), 148-183 (NNIK…AGFQ), 184-212 (LNEQ…ISCL), and 213-247 (VRLD…TMYS).

As to quaternary structure, heterodimer of a large (catalytic) and a small (regulatory) subunit.

It is found in the cytoplasm. The protein resides in the cell membrane. In terms of biological role, calcium-regulated non-lysosomal thiol-protease which catalyzes limited proteolysis of substrates involved in cytoskeletal remodeling and signal transduction. This small subunit may act as a tissue-specific chaperone of the large subunit, possibly by helping it fold into its correct conformation for activity. The sequence is that of Calpain small subunit 2 (Capns2) from Mus musculus (Mouse).